Here is a 741-residue protein sequence, read N- to C-terminus: Eukaryotic translation initiation factor 3 subunit B (741 aa).

The span at 1 to 10 shows a compositional bias: polar residues; sequence MAPSFDTLSE. The segment at 1-21 is disordered; the sequence is MAPSFDTLSEQDLHEEEEEEI. One can recognise an RRM domain in the interval 40-126; that stretch reads TFIVIDGLPI…HTLAVNKLMD (87 aa). WD repeat units follow at residues 193–230, 232–289, 303–344, 514–557, and 572–610; these read AHWT…KQKQ, PHPF…RSFV, APKK…LLGK, IEKK…EKAE, and VEHY…HTFA. Positions 696 to 723 are disordered; sequence DAYGIPEDADDAKVAKDAPPVSEDQGEA.

This sequence belongs to the eIF-3 subunit B family. In terms of assembly, component of the eukaryotic translation initiation factor 3 (eIF-3) complex.

The protein resides in the cytoplasm. Its function is as follows. RNA-binding component of the eukaryotic translation initiation factor 3 (eIF-3) complex, which is involved in protein synthesis of a specialized repertoire of mRNAs and, together with other initiation factors, stimulates binding of mRNA and methionyl-tRNAi to the 40S ribosome. The eIF-3 complex specifically targets and initiates translation of a subset of mRNAs involved in cell proliferation. This Aspergillus oryzae (strain ATCC 42149 / RIB 40) (Yellow koji mold) protein is Eukaryotic translation initiation factor 3 subunit B (prt1).